The primary structure comprises 143 residues: Hemoglobin cathodic subunit alpha (143 aa).

Ser-1 carries the post-translational modification N-acetylserine. Residues 1 to 143 (SLAPGDKTVV…VCAALSDKYR (143 aa)) form the Globin domain. Position 59 (His-59) interacts with O2. His-89 provides a ligand contact to heme b.

It belongs to the globin family. In terms of assembly, heterotetramer of two alpha chains and two beta chains. Red blood cells.

Functionally, involved in oxygen transport from gills to the various peripheral tissues. The polypeptide is Hemoglobin cathodic subunit alpha (Gymnothorax unicolor (Brown moray)).